The following is a 381-amino-acid chain: Sulfate adenylyltransferase (381 aa).

It belongs to the sulfate adenylyltransferase family.

The enzyme catalyses sulfate + ATP + H(+) = adenosine 5'-phosphosulfate + diphosphate. It participates in sulfur metabolism; hydrogen sulfide biosynthesis; sulfite from sulfate: step 1/3. The chain is Sulfate adenylyltransferase from Carboxydothermus hydrogenoformans (strain ATCC BAA-161 / DSM 6008 / Z-2901).